A 428-amino-acid chain; its full sequence is Cyclin-B1-1 (428 aa).

Belongs to the cyclin family. Cyclin AB subfamily. As to quaternary structure, interacts with FZR2/CCS52A1, FZR1/CCS52A2 and FZR3/CCS52B. Expressed in root tip, lateral root apex, shoot apex, leaf primordia, axillary buds, stamen and petal primordia, ovules and developing embryo.

The protein resides in the nucleus. The chain is Cyclin-B1-1 (CYCB1-1) from Arabidopsis thaliana (Mouse-ear cress).